The following is a 337-amino-acid chain: Cytoskeleton protein RodZ (337 aa).

Residues Met1–Gly111 lie on the Cytoplasmic side of the membrane. An HTH cro/C1-type domain is found at Leu19–Leu71. A DNA-binding region (H-T-H motif) is located at residues Gln30–Glu49. A helical; Signal-anchor for type II membrane protein membrane pass occupies residues Trp112–Trp132. The Periplasmic segment spans residues Trp133–Gln337. The segment covering Thr145–Asn167 has biased composition (polar residues). Positions Thr145–Val218 are disordered. Positions Thr168 to Gln207 are enriched in low complexity. The segment covering Asn208–Val218 has biased composition (polar residues).

This sequence belongs to the RodZ family.

The protein resides in the cell inner membrane. Cytoskeletal protein that is involved in cell-shape control through regulation of the length of the long axis. The sequence is that of Cytoskeleton protein RodZ from Shigella flexneri serotype 5b (strain 8401).